We begin with the raw amino-acid sequence, 430 residues long: Adenylosuccinate synthetase (430 aa).

Residues 12–18 (GDEGKGK) and 40–42 (GHT) each bind GTP. The active-site Proton acceptor is Asp13. Mg(2+)-binding residues include Asp13 and Gly40. Residues 13 to 16 (DEGK), 38 to 41 (NAGH), Thr128, Arg142, Gln223, Thr238, and Arg302 each bind IMP. The active-site Proton donor is His41. 298–304 (TTTGRPR) serves as a coordination point for substrate. GTP contacts are provided by residues Arg304, 330-332 (SID), and 412-414 (SVG).

The protein belongs to the adenylosuccinate synthetase family. In terms of assembly, homodimer. Mg(2+) is required as a cofactor.

It localises to the cytoplasm. The catalysed reaction is IMP + L-aspartate + GTP = N(6)-(1,2-dicarboxyethyl)-AMP + GDP + phosphate + 2 H(+). It functions in the pathway purine metabolism; AMP biosynthesis via de novo pathway; AMP from IMP: step 1/2. Functionally, plays an important role in the de novo pathway of purine nucleotide biosynthesis. Catalyzes the first committed step in the biosynthesis of AMP from IMP. This is Adenylosuccinate synthetase from Streptococcus uberis (strain ATCC BAA-854 / 0140J).